The chain runs to 55 residues: ATP synthase F(0) complex subunit 8 (55 aa).

The helical transmembrane segment at 10–32 (FFTMLTTWLTFLLLIQPKLLSFI) threads the bilayer.

Belongs to the ATPase protein 8 family. As to quaternary structure, component of the ATP synthase complex composed at least of ATP5F1A/subunit alpha, ATP5F1B/subunit beta, ATP5MC1/subunit c (homooctomer), MT-ATP6/subunit a, MT-ATP8/subunit 8, ATP5ME/subunit e, ATP5MF/subunit f, ATP5MG/subunit g, ATP5MK/subunit k, ATP5MJ/subunit j, ATP5F1C/subunit gamma, ATP5F1D/subunit delta, ATP5F1E/subunit epsilon, ATP5PF/subunit F6, ATP5PB/subunit b, ATP5PD/subunit d, ATP5PO/subunit OSCP. ATP synthase complex consists of a soluble F(1) head domain (subunits alpha(3) and beta(3)) - the catalytic core - and a membrane F(0) domain - the membrane proton channel (subunits c, a, 8, e, f, g, k and j). These two domains are linked by a central stalk (subunits gamma, delta, and epsilon) rotating inside the F1 region and a stationary peripheral stalk (subunits F6, b, d, and OSCP).

The protein resides in the mitochondrion membrane. In terms of biological role, subunit 8, of the mitochondrial membrane ATP synthase complex (F(1)F(0) ATP synthase or Complex V) that produces ATP from ADP in the presence of a proton gradient across the membrane which is generated by electron transport complexes of the respiratory chain. ATP synthase complex consist of a soluble F(1) head domain - the catalytic core - and a membrane F(1) domain - the membrane proton channel. These two domains are linked by a central stalk rotating inside the F(1) region and a stationary peripheral stalk. During catalysis, ATP synthesis in the catalytic domain of F(1) is coupled via a rotary mechanism of the central stalk subunits to proton translocation. In vivo, can only synthesize ATP although its ATP hydrolase activity can be activated artificially in vitro. Part of the complex F(0) domain. This Guira guira (Guira cuckoo) protein is ATP synthase F(0) complex subunit 8.